The primary structure comprises 296 residues: 4-hydroxy-tetrahydrodipicolinate synthase (296 aa).

A pyruvate-binding site is contributed by Thr50. The active-site Proton donor/acceptor is the Tyr138. The active-site Schiff-base intermediate with substrate is the Lys166. Residue Ile208 coordinates pyruvate.

Belongs to the DapA family. Homotetramer; dimer of dimers.

The protein resides in the cytoplasm. The enzyme catalyses L-aspartate 4-semialdehyde + pyruvate = (2S,4S)-4-hydroxy-2,3,4,5-tetrahydrodipicolinate + H2O + H(+). Its pathway is amino-acid biosynthesis; L-lysine biosynthesis via DAP pathway; (S)-tetrahydrodipicolinate from L-aspartate: step 3/4. In terms of biological role, catalyzes the condensation of (S)-aspartate-beta-semialdehyde [(S)-ASA] and pyruvate to 4-hydroxy-tetrahydrodipicolinate (HTPA). The chain is 4-hydroxy-tetrahydrodipicolinate synthase from Ruthia magnifica subsp. Calyptogena magnifica.